Here is a 35-residue protein sequence, read N- to C-terminus: Photosystem II reaction center protein T (35 aa).

Residues 3–23 (ALVYTFLLVSTLGIIFFAIFF) form a helical membrane-spanning segment.

This sequence belongs to the PsbT family. PSII is composed of 1 copy each of membrane proteins PsbA, PsbB, PsbC, PsbD, PsbE, PsbF, PsbH, PsbI, PsbJ, PsbK, PsbL, PsbM, PsbT, PsbY, PsbZ, Psb30/Ycf12, at least 3 peripheral proteins of the oxygen-evolving complex and a large number of cofactors. It forms dimeric complexes.

It localises to the plastid. It is found in the chloroplast thylakoid membrane. In terms of biological role, found at the monomer-monomer interface of the photosystem II (PS II) dimer, plays a role in assembly and dimerization of PSII. PSII is a light-driven water plastoquinone oxidoreductase, using light energy to abstract electrons from H(2)O, generating a proton gradient subsequently used for ATP formation. The protein is Photosystem II reaction center protein T of Stangeria eriopus (Natal grass cycad).